Here is a 32-residue protein sequence, read N- to C-terminus: Potassium channel toxin alpha-KTx 10.2 (32 aa).

3 cysteine pairs are disulfide-bonded: Cys-3/Cys-22, Cys-8/Cys-12, and Cys-27/Cys-29. Tyr-32 bears the Tyrosine amide mark.

Belongs to the short scorpion toxin superfamily. Potassium channel inhibitor family. Alpha-KTx 10 subfamily. In terms of tissue distribution, expressed by the venom gland.

It is found in the secreted. In terms of biological role, blocks Shaker B potassium-channels (Kv1.1/KCNA1 sub-family). In Centruroides noxius (Mexican scorpion), this protein is Potassium channel toxin alpha-KTx 10.2.